Here is a 640-residue protein sequence, read N- to C-terminus: Threonine--tRNA ligase (640 aa).

The TGS domain maps to 1-61 (MPIITLPNGD…TEDATLQIIT (61 aa)). Residues 242–533 (DHRKIGKALD…LIEHYAGFMP (292 aa)) form a catalytic region. 3 residues coordinate Zn(2+): cysteine 333, histidine 384, and histidine 510.

This sequence belongs to the class-II aminoacyl-tRNA synthetase family. Homodimer. The cofactor is Zn(2+).

Its subcellular location is the cytoplasm. The enzyme catalyses tRNA(Thr) + L-threonine + ATP = L-threonyl-tRNA(Thr) + AMP + diphosphate + H(+). Catalyzes the attachment of threonine to tRNA(Thr) in a two-step reaction: L-threonine is first activated by ATP to form Thr-AMP and then transferred to the acceptor end of tRNA(Thr). Also edits incorrectly charged L-seryl-tRNA(Thr). The sequence is that of Threonine--tRNA ligase from Acinetobacter baylyi (strain ATCC 33305 / BD413 / ADP1).